A 474-amino-acid polypeptide reads, in one-letter code: Phosphomannomutase (474 aa).

The active-site Phosphoserine intermediate is the S101. Mg(2+) contacts are provided by S101, D242, D244, and D246.

Belongs to the phosphohexose mutase family. It depends on Mg(2+) as a cofactor.

The catalysed reaction is alpha-D-mannose 1-phosphate = D-mannose 6-phosphate. In Sinorhizobium fredii (strain NBRC 101917 / NGR234), this protein is Phosphomannomutase (noeK).